The primary structure comprises 153 residues: Nucleoside diphosphate kinase (153 aa).

Residue Ala-2 is modified to N-acetylalanine. ATP is bound by residues Lys-13, Phe-61, Arg-89, Thr-95, Arg-106, and Asn-116. His-119 functions as the Pros-phosphohistidine intermediate in the catalytic mechanism. Residue Ser-126 is modified to Phosphoserine.

This sequence belongs to the NDK family. Homohexamer. Mg(2+) is required as a cofactor.

Its subcellular location is the cytoplasm. The protein localises to the cytoskeleton. It carries out the reaction a 2'-deoxyribonucleoside 5'-diphosphate + ATP = a 2'-deoxyribonucleoside 5'-triphosphate + ADP. It catalyses the reaction a ribonucleoside 5'-diphosphate + ATP = a ribonucleoside 5'-triphosphate + ADP. Major role in the synthesis of nucleoside triphosphates other than ATP. The ATP gamma phosphate is transferred to the NDP beta phosphate via a ping-pong mechanism, using a phosphorylated active-site intermediate. The polypeptide is Nucleoside diphosphate kinase (awd) (Drosophila melanogaster (Fruit fly)).